The primary structure comprises 70 residues: Small ribosomal subunit protein bS21 (70 aa).

Belongs to the bacterial ribosomal protein bS21 family.

This Helicobacter acinonychis (strain Sheeba) protein is Small ribosomal subunit protein bS21.